The chain runs to 393 residues: Metal tolerance protein C2 (393 aa).

The segment at 1 to 23 is disordered; sequence MERSISFNPRGDNELPDDRSSDV. Residues 1-113 are Cytoplasmic-facing; sequence MERSISFNPR…VTSGNRQMKR (113 aa). A compositionally biased stretch (basic and acidic residues) spans 11–21; sequence GDNELPDDRSS. The helical transmembrane segment at 114-134 threads the bilayer; it reads LFLLIALNVLYSTTELSIGIF. The Vacuolar portion of the chain corresponds to 135–139; it reads TGRVG. Residues 140–160 traverse the membrane as a helical segment; the sequence is LVSDAFHLTFGCGLLTFSLFA. Over 161–186 the chain is Cytoplasmic; the sequence is MATSRKKPDHAYSYGYKRLEVLSAFT. A helical transmembrane segment spans residues 187 to 207; that stretch reads NALFLMFMSFSLAVEALHAFI. The Vacuolar segment spans residues 208 to 214; that stretch reads QDESEHK. Residues 215–235 form a helical membrane-spanning segment; that stretch reads HYLIVSAVTNLLVNLLGVWFF. Over 236–259 the chain is Cytoplasmic; that stretch reads RNYARVNIAYRKAEDMNYHSVCLH. The chain crosses the membrane as a helical span at residues 260–280; it reads VISDSIRSAGLILASWLLSLG. Residues 281 to 283 lie on the Vacuolar side of the membrane; that stretch reads VEN. The chain crosses the membrane as a helical span at residues 284–304; that stretch reads AEVLCLGLVSVTVFMLVMPLF. Over 305-393 the chain is Cytoplasmic; sequence KATGGVLLQM…QDLTLQTDYT (89 aa).

It belongs to the cation diffusion facilitator (CDF) transporter (TC 2.A.4) family.

Its subcellular location is the vacuole membrane. Functionally, involved in sequestration of excess metal in the cytoplasm into vacuoles to maintain metal homeostasis. This is Metal tolerance protein C2 (MTPC2) from Arabidopsis thaliana (Mouse-ear cress).